The following is a 116-amino-acid chain: Large ribosomal subunit protein bL17 (116 aa).

This sequence belongs to the bacterial ribosomal protein bL17 family. Part of the 50S ribosomal subunit. Contacts protein L32.

The chain is Large ribosomal subunit protein bL17 from Gloeothece citriformis (strain PCC 7424) (Cyanothece sp. (strain PCC 7424)).